The following is a 783-amino-acid chain: Nuclear cap-binding protein subunit 1 (783 aa).

Positions 1–25 (MSRRRAHDTEDESYDHRRNKRRRVS) are disordered. At threonine 9 the chain carries Phosphothreonine. The 213-residue stretch at 31–243 (EDRLESLILR…CLWAQIRKLR (213 aa)) folds into the MIF4G domain. The segment at 652–683 (LSKADSSSSDTDEDTPHKRKKPITHADKPSEE) is disordered.

This sequence belongs to the NCBP1 family. As to quaternary structure, component of the nuclear cap-binding complex (CBC), a heterodimer composed of Cbp80 and Cbp20 that interacts with m7GpppG-capped RNA.

The protein localises to the nucleus. Its function is as follows. Component of the cap-binding complex (CBC), which binds cotranscriptionally to the 5'-cap of pre-mRNAs and is involved in various processes such as pre-mRNA splicing and RNA-mediated gene silencing (RNAi). The CBC complex is involved in miRNA-mediated RNA interference via its interaction with Ars2 and is required for primary microRNAs (miRNAs) processing. Also involved in innate immunity via the short interfering RNAs (siRNAs) processing machinery by restricting the viral RNA production. In the CBC complex, Cbp80 does not bind directly capped RNAs (m7GpppG-capped RNA) but is required to stabilize the movement of the N-terminal loop of Cbp20 and lock the CBC into a high affinity cap-binding state with the cap structure. In Drosophila virilis (Fruit fly), this protein is Nuclear cap-binding protein subunit 1 (Cbp80).